We begin with the raw amino-acid sequence, 477 residues long: 3-isopropylmalate dehydratase large subunit (477 aa).

Residues Cys358, Cys419, and Cys422 each coordinate [4Fe-4S] cluster.

The protein belongs to the aconitase/IPM isomerase family. LeuC type 1 subfamily. Heterodimer of LeuC and LeuD. It depends on [4Fe-4S] cluster as a cofactor.

The catalysed reaction is (2R,3S)-3-isopropylmalate = (2S)-2-isopropylmalate. Its pathway is amino-acid biosynthesis; L-leucine biosynthesis; L-leucine from 3-methyl-2-oxobutanoate: step 2/4. Functionally, catalyzes the isomerization between 2-isopropylmalate and 3-isopropylmalate, via the formation of 2-isopropylmaleate. This chain is 3-isopropylmalate dehydratase large subunit, found in Acinetobacter baylyi (strain ATCC 33305 / BD413 / ADP1).